Consider the following 130-residue polypeptide: Small ribosomal subunit protein uS11 (130 aa).

Belongs to the universal ribosomal protein uS11 family. Part of the 30S ribosomal subunit. Interacts with proteins S7 and S18. Binds to IF-3.

In terms of biological role, located on the platform of the 30S subunit, it bridges several disparate RNA helices of the 16S rRNA. Forms part of the Shine-Dalgarno cleft in the 70S ribosome. In Campylobacter lari (strain RM2100 / D67 / ATCC BAA-1060), this protein is Small ribosomal subunit protein uS11.